Reading from the N-terminus, the 120-residue chain is MASVKRVVVAVMIVNVLALIFVGVAGSTRDVGSGGDDSEGARGREQQQVQQHEQNEDRSLFERGRAAVTGHPVRTAVGLAAAVVAVVSLLRLLKRRRRRAIQEESKESATAEEEEVAEEE.

Positions 1–25 (MASVKRVVVAVMIVNVLALIFVGVA) are cleaved as a signal peptide. The disordered stretch occupies residues 27 to 59 (STRDVGSGGDDSEGARGREQQQVQQHEQNEDRS). A helical transmembrane segment spans residues 76 to 93 (AVGLAAAVVAVVSLLRLL). The span at 100-109 (AIQEESKESA) shows a compositional bias: basic and acidic residues. The tract at residues 100 to 120 (AIQEESKESATAEEEEVAEEE) is disordered. Residues 110-120 (TAEEEEVAEEE) show a composition bias toward acidic residues.

It localises to the secreted. It is found in the parasitophorous vacuole lumen. Its subcellular location is the parasitophorous vacuole membrane. The protein localises to the cytoplasmic vesicle. The protein resides in the secretory vesicle. In terms of biological role, plays a role in the function of the cyst and parasitophorous vacuole membranes and therefore in host-parasite interactions. The chain is Dense granule protein 5 (GRA5) from Toxoplasma gondii.